A 381-amino-acid polypeptide reads, in one-letter code: tRNA pseudouridine synthase D (381 aa).

D81 acts as the Nucleophile in catalysis. Residues 160–335 enclose the TRUD domain; that stretch reads GMPNYFGSQR…TLGSRRFFWV (176 aa).

Belongs to the pseudouridine synthase TruD family.

It carries out the reaction uridine(13) in tRNA = pseudouridine(13) in tRNA. Its function is as follows. Responsible for synthesis of pseudouridine from uracil-13 in transfer RNAs. The sequence is that of tRNA pseudouridine synthase D from Helicobacter pylori (strain HPAG1).